We begin with the raw amino-acid sequence, 463 residues long: Glutamate--tRNA ligase 2 (463 aa).

The 'HIGH' region signature appears at proline 10–serine 20. The 'KMSKS' region signature appears at lysine 239–arginine 243. Lysine 242 is an ATP binding site.

It belongs to the class-I aminoacyl-tRNA synthetase family. Glutamate--tRNA ligase type 1 subfamily. In terms of assembly, monomer.

The protein resides in the cytoplasm. The enzyme catalyses tRNA(Glu) + L-glutamate + ATP = L-glutamyl-tRNA(Glu) + AMP + diphosphate. Functionally, catalyzes the attachment of glutamate to tRNA(Glu) in a two-step reaction: glutamate is first activated by ATP to form Glu-AMP and then transferred to the acceptor end of tRNA(Glu). The protein is Glutamate--tRNA ligase 2 of Rickettsia felis (strain ATCC VR-1525 / URRWXCal2) (Rickettsia azadi).